The sequence spans 401 residues: MVDLEQEFALGGRCLAFHGPLMYEAKILKIWDPSSKMYTSIPNDKPGGSSQATKEIKPQKLGEDESIPEEIINGKCFFIHYQGWKSSWDEWVGYDRIRAYNEENIAMKKRLANEAKEAKKSLLEQQKKKKLSTSLGGPSNGGKRKGDSRSNASISKSTSQSFLTSSVSGRKSGRSSANSLHPGSSLRSSSDQNGNDDRRRSSSLSPNMLHHIAGYPTPKISLQIPIKLKSVLVDDWEYVTKDKKICRLPADVTVEMVLNKYEHEVSQELESPGSQSQLSEYCAGLKLYFDKCLGNMLLYRLERLQYDELLKKSSKDQKPLVPIRIYGAIHLLRLISVLPELISSTTMDLQSCQLLIKQTEDFLVWLLMHVDEYFNDKDPNRSDDALYVNTSSQYEGVALGM.

Positions 13–98 (RCLAFHGPLM…DEWVGYDRIR (86 aa)) constitute a Tudor-knot domain. A compositionally biased stretch (polar residues) spans 39–53 (TSIPNDKPGGSSQAT). 2 disordered regions span residues 39–65 (TSIPNDKPGGSSQATKEIKPQKLGEDE) and 117–210 (EAKK…NMLH). Composition is skewed to basic and acidic residues over residues 54-63 (KEIKPQKLGE) and 117-126 (EAKKSLLEQQ). Residues 153 to 190 (SISKSTSQSFLTSSVSGRKSGRSSANSLHPGSSLRSSS) show a composition bias toward low complexity. Serine 201 is subject to Phosphoserine. One can recognise an MRG domain in the interval 216 to 399 (PTPKISLQIP…TSSQYEGVAL (184 aa)).

The protein belongs to the MRG family. As to quaternary structure, component of the NuA4 histone acetyltransferase complex composed of at least ACT1, ARP4, YAF9, VID21, SWC4, EAF3, EAF5, EAF6, EAF7, EPL1, ESA1, TRA1 and YNG2.

Its subcellular location is the nucleus. Functionally, component of the NuA4 histone acetyltransferase complex which is involved in transcriptional activation of selected genes principally by acetylation of nucleosomal histone H4 and H2A. The NuA4 complex is also involved in DNA repair. The sequence is that of Chromatin modification-related protein EAF3 (EAF3) from Saccharomyces cerevisiae (strain ATCC 204508 / S288c) (Baker's yeast).